Consider the following 354-residue polypeptide: Green-sensitive opsin-3 (354 aa).

Residues 1 to 39 (MSGLNGFEGDNFYIPMSNRTGLVRDPFVYEQYYLAEPWQ) are Extracellular-facing. N-linked (GlcNAc...) asparagine glycosylation occurs at asparagine 18. Residues 40-64 (FKLLACYMFFLICLGLPINGFTLFV) traverse the membrane as a helical segment. At 65 to 76 (TAQHKKLQQPLN) the chain is on the cytoplasmic side. The chain crosses the membrane as a helical span at residues 77–102 (FILVNLAVAGMIMVCFGFTITISSAV). At 103-116 (NGYFYFGPTACAIE) the chain is on the extracellular side. The cysteines at positions 113 and 190 are disulfide-linked. The helical transmembrane segment at 117–136 (GFMATLGGEVALWSLVVLAI) threads the bilayer. Topologically, residues 137–155 (ERYIVVCKPMGSFKFSASH) are cytoplasmic. Residues 156–179 (ALGGIGFTWFMAMTCAAPPLVGWS) form a helical membrane-spanning segment. The Extracellular segment spans residues 180-205 (RYIPEGLQCSCGPDYYTLNPKYNNES). Asparagine 203 carries an N-linked (GlcNAc...) asparagine glycan. Residues 206–233 (YVIYMFVVHFIVPVTVIFFTYGRLVCTV) traverse the membrane as a helical segment. Residues 234 to 255 (KSAAAAQQDSASTQKAEKEVTR) lie on the Cytoplasmic side of the membrane. A helical membrane pass occupies residues 256–279 (MVILMVVGFLVAWTPYATVAAWIF). Residues 280-287 (FNKGAAFT) lie on the Extracellular side of the membrane. Residues 288–312 (AQFMAVPAFFSKSSALFNPIIYVLL) traverse the membrane as a helical segment. Residue lysine 299 is modified to N6-(retinylidene)lysine. Topologically, residues 313–354 (NKQFRNCMLTTLFCGKNPLGDEESSTVSTKTEVSTVSSVSPA) are cytoplasmic.

This sequence belongs to the G-protein coupled receptor 1 family. Opsin subfamily. As to expression, the color pigments are found in the cone photoreceptor cells.

The protein resides in the membrane. Functionally, visual pigments are the light-absorbing molecules that mediate vision. They consist of an apoprotein, opsin, covalently linked to cis-retinal. The polypeptide is Green-sensitive opsin-3 (RH11) (Psalidodon fasciatus (Banded astyanax)).